Here is a 759-residue protein sequence, read N- to C-terminus: Cullin-4A (759 aa).

Lys-8 participates in a covalent cross-link: Glycyl lysine isopeptide (Lys-Gly) (interchain with G-Cter in SUMO2). The residue at position 10 (Ser-10) is a Phosphoserine. Residue Lys-33 forms a Glycyl lysine isopeptide (Lys-Gly) (interchain with G-Cter in ubiquitin) linkage. Positions 691-751 (DRQYQIDAAI…RDYMERDKDN (61 aa)) constitute a Cullin neddylation domain. Lys-705 participates in a covalent cross-link: Glycyl lysine isopeptide (Lys-Gly) (interchain with G-Cter in NEDD8).

The protein belongs to the cullin family. Can self-associate. Component of multiple DCX (DDB1-CUL4-X-box) E3 ubiquitin-protein ligase complexes that seem to consist of DDB1, CUL4A or CUL4B, RBX1 and a variable substrate recognition component which seems to belong to a protein family described as DCAF (Ddb1- and Cul4-associated factor) or CDW (CUL4-DDB1-associated WD40-repeat) proteins. Component of the CSA complex (DCX(ERCC8) complex) containing ERCC8, RBX1, DDB1 and CUL4A; the CSA complex interacts with RNA polymerase II; upon UV irradiation it interacts with the COP9 signalosome and preferentially with the hyperphosphorylated form of RNA polymerase II. Component of the DCX(DET1-COP1) complex with the substrate recognition component DET1 and COP1. Component of the DCX(DDB2) complex with the substrate recognition component DDB2. Component of the DCX(DTL) complex with the putative substrate recognition component DTL. Component of DCX complexes part of the DesCEND (destruction via C-end degrons) pathway, which contain either TRPC4AP or DCAF12 as substrate-recognition component. Component of the DCX(AMBRA1) complex with the substrate recognition component AMBRA1. Interacts with DDB1, RBX1, RNF7, CDT1, TIP120A/CAND1, SKP2, CDKN1B, MDM2, TP53 and HOXA9. Interacts with DDB2; the interactions with DDB2 and CAND1 are mutually exclusive. Interacts with DCAF1, DTL, DDA1, DCAF6, DCAF4, DCAF16, DCAF17, DET1, WDTC1, DCAF5, DCAF11, WDR24A, COP1, PAFAH1B1, ERCC8, GRWD1, FBXW5, RBBP7, GNB2, WSB1, WSB2, NUP43, PWP1, FBXW8, ATG16L1, KATNB1, RBBP4, RBBP5, LRWD1 and DCAF8. May interact with WDR26, WDR51B, SNRNP40, WDR61, WDR76, WDR5. Interacts (when neddylated) with ARIH1; leading to activate the E3 ligase activity of ARIH1. The DDB1-CUL4A complex interacts with CRY1. Interacts (unneddylated form) with DCUN1D1, DCUN1D2, DCUN1D3, DCUN1D4 and DCUN1D5; these interactions promote the cullin neddylation. As to quaternary structure, (Microbial infection) Interacts with Epstein-Barr virus BPLF1. In terms of processing, neddylated; required for activity of cullin-RING-based E3 ubiquitin-protein ligase complexes. Deneddylated via its interaction with the COP9 signalosome (CSN) complex. Post-translationally, (Microbial infection) Deneddylated by Epstein-Barr virus BPLF1 leading to a S-phase-like environment that is required for efficient replication of the viral genome.

Its pathway is protein modification; protein ubiquitination. Core component of multiple cullin-RING-based E3 ubiquitin-protein ligase complexes which mediate the ubiquitination of target proteins. As a scaffold protein may contribute to catalysis through positioning of the substrate and the ubiquitin-conjugating enzyme. The E3 ubiquitin-protein ligase activity of the complex is dependent on the neddylation of the cullin subunit and is inhibited by the association of the deneddylated cullin subunit with TIP120A/CAND1. The functional specificity of the E3 ubiquitin-protein ligase complex depends on the variable substrate recognition component. DCX(DET1-COP1) directs ubiquitination of JUN. DCX(DDB2) directs ubiquitination of XPC. DCX(DDB2) ubiquitinates histones H3-H4 and is required for efficient histone deposition during replication-coupled (H3.1) and replication-independent (H3.3) nucleosome assembly, probably by facilitating the transfer of H3 from ASF1A/ASF1B to other chaperones involved in histone deposition. DCX(DTL) plays a role in PCNA-dependent polyubiquitination of CDT1 and MDM2-dependent ubiquitination of p53/TP53 in response to radiation-induced DNA damage and during DNA replication. DCX(DTL) directs autoubiquitination of DTL. In association with DDB1 and SKP2 probably is involved in ubiquitination of CDKN1B/p27kip. Is involved in ubiquitination of HOXA9. The DDB1-CUL4A-DTL E3 ligase complex regulates the circadian clock function by mediating the ubiquitination and degradation of CRY1. The DCX(ERCC8) complex (also named CSA complex) plays a role in transcription-coupled repair (TCR). A number of DCX complexes (containing either TRPC4AP or DCAF12 as substrate-recognition component) are part of the DesCEND (destruction via C-end degrons) pathway, which recognizes a C-degron located at the extreme C terminus of target proteins, leading to their ubiquitination and degradation. The DCX(AMBRA1) complex is a master regulator of the transition from G1 to S cell phase by mediating ubiquitination of phosphorylated cyclin-D (CCND1, CCND2 and CCND3). The DCX(AMBRA1) complex also acts as a regulator of Cul5-RING (CRL5) E3 ubiquitin-protein ligase complexes by mediating ubiquitination and degradation of Elongin-C (ELOC) component of CRL5 complexes. With CUL4B, contributes to ribosome biogenesis. This is Cullin-4A from Homo sapiens (Human).